The primary structure comprises 582 residues: Regulatory solute carrier protein family 1 member 1 (582 aa).

Disordered regions lie at residues 1 to 32, 56 to 76, 143 to 180, 303 to 325, 363 to 384, 390 to 409, 426 to 452, and 483 to 529; these read MSSL…ARSV, KASA…LQVL, EKSW…VPQD, VDMS…HGQP, VTCQ…SGRR, LTPS…SESG, ASTS…ESAR, and SEGA…LSTP. The segment covering 16–32 has biased composition (polar residues); the sequence is SGQSPEVGSPTSLARSV. Residues 148–179 are compositionally biased toward polar residues; that stretch reads PENQTPSPVNGLQQHRETGSVQREAGQQSVPQ. The span at 390 to 408 shows a compositional bias: polar residues; that stretch reads LTPSDQYSQGSCHQATSES. Basic and acidic residues-rich tracts occupy residues 438–452 and 490–503; these read SPDR…ESAR and PSEH…DRPE. The UBA domain maps to 536–576; the sequence is IFPAADVDRILGAGFTLQEALGALHRVGGNADLALLVLLAK.

As to quaternary structure, interacts with YRDC. In terms of tissue distribution, expressed in epithelial and subepithelial cells of small intestine.

It localises to the cell membrane. It is found in the nucleus. The protein localises to the golgi apparatus. The protein resides in the trans-Golgi network. Mediates transcriptional and post-transcriptional regulation of SLC5A1. Inhibits a dynamin and PKC-dependent exocytotic pathway of SLC5A1. Also involved in transcriptional regulation of SLC22A2. Exhibits glucose-dependent, short-term inhibition of SLC5A1 and SLC22A2 by inhibiting the release of vesicles from the trans-Golgi network. Regulates the expression of SLC5A1 in a tissue-specific manner and is specifically involved in its regulation in the small intestine. The chain is Regulatory solute carrier protein family 1 member 1 (Rsc1a1) from Mus musculus (Mouse).